Here is a 132-residue protein sequence, read N- to C-terminus: Small ribosomal subunit protein uS9 (132 aa).

This sequence belongs to the universal ribosomal protein uS9 family.

The sequence is that of Small ribosomal subunit protein uS9 (rpsI) from Mycoplasma pneumoniae (strain ATCC 29342 / M129 / Subtype 1) (Mycoplasmoides pneumoniae).